Consider the following 107-residue polypeptide: Ig kappa chain V-VI region SAPC 10 (107 aa).

Residues 1 to 23 (EIVLTQSPAITAASLGQKVTITC) form a framework-1 region. Cysteines 23 and 87 form a disulfide. Positions 24 to 33 (SASSSVSYMH) are complementarity-determining-1. A framework-2 region spans residues 34 to 48 (WYQQKSGTSPKPWIY). Positions 49–55 (EISKLAS) are complementarity-determining-2. Residues 56 to 87 (GVPARFSGSGSGTSYSLTISSMEAEDAAIYYC) form a framework-3 region. The interval 88–96 (QQWNYPLIT) is complementarity-determining-3. The framework-4 stretch occupies residues 97-106 (FGGGTKLEIK).

The protein is Ig kappa chain V-VI region SAPC 10 of Mus musculus (Mouse).